We begin with the raw amino-acid sequence, 2149 residues long: Serine/threonine-protein kinase WNK2 (2149 aa).

Residues 1-10 (MDGDGGRRDA) show a composition bias toward basic and acidic residues. Disordered regions lie at residues 1–75 (MDGD…QRRV) and 87–183 (ERAR…EDDL). Omega-N-methylarginine occurs at positions 19 and 30. Position 45 is a phosphoserine (S45). A compositionally biased stretch (pro residues) spans 95 to 114 (APAPAAPAAPPGSPSVPSDP). Basic and acidic residues predominate over residues 161-172 (AKPEPGRARKDE). A compositionally biased stretch (acidic residues) spans 173 to 182 (PEEEEDDEDD). Residues 195-453 (LKFDIELGRG…IKDLLSHAFF (259 aa)) form the Protein kinase domain. ATP-binding positions include S205, 275–278 (TELM), and K325. D342 (proton acceptor) is an active-site residue. S352 and S356 each carry phosphoserine; by autocatalysis. S560 is subject to Phosphoserine. Disordered regions lie at residues 578 to 630 (HAQS…DSQS), 703 to 728 (SMSF…APPV), and 1067 to 1133 (QEEQ…ERAS). The segment covering 605–625 (ASVTSLASDSTFDSGQGSTVY) has biased composition (polar residues). Residues 709–728 (VLPPPSTPVPTGPSQPAPPV) are compositionally biased toward pro residues. Positions 1081–1092 (QSSESFGGSDVT) are enriched in polar residues. S1098 bears the Phosphoserine mark. Basic residues predominate over residues 1115–1126 (ARKHHRRSTRAR). Residue S1210 is modified to Phosphoserine. Disordered regions lie at residues 1211–1234 (EDTD…CGLA) and 1270–1502 (PATD…GFVD). 2 stretches are compositionally biased toward low complexity: residues 1275-1292 (SESS…EASQ) and 1317-1353 (SQAG…STVP). Positions 1386–1400 (RSAQCTAQPLSTGQG) are enriched in polar residues. A compositionally biased stretch (pro residues) spans 1470-1485 (LPSPPLGPTAPPPPPS). Residues S1507, S1566, and S1594 each carry the phosphoserine modification. Disordered regions lie at residues 1521 to 1727 (VPTS…PSSP) and 1739 to 1778 (ASSI…GGVA). Residues 1553–1567 (SDKTPSLTQQTQPSL) show a composition bias toward polar residues. The segment covering 1587–1597 (SSPMTAESSSS) has biased composition (low complexity). Positions 1610 to 1629 (ASDSSTAPSVPQDASGSSVP) are enriched in polar residues. Phosphoserine occurs at positions 1725, 1726, 1770, and 1797. The span at 1916 to 1928 (ASSTGHLSDSSRG) shows a compositional bias: polar residues. Residues 1916-1947 (ASSTGHLSDSSRGPPTKDPRGTKAVQTQQPCS) are disordered. S1962 is subject to Phosphoserine. Residues 2018 to 2031 (SSLYDSPGSSTSSL) show a composition bias toward polar residues. 2 disordered regions span residues 2018 to 2044 (SSLY…PTLH) and 2122 to 2149 (GPLS…EKPD). The segment covering 2122-2135 (GPLSTTATPGATPA) has biased composition (low complexity).

Belongs to the protein kinase superfamily. Ser/Thr protein kinase family. WNK subfamily. As to quaternary structure, forms a complex with the phosphorylated form of STK39 in the brain. It depends on Mg(2+) as a cofactor. Post-translationally, autophosphorylated. Autophosphorylation at Ser-352 and Ser-356 promotes its activity. Brain and heart.

Its subcellular location is the cytoplasm. It is found in the cell membrane. It carries out the reaction L-seryl-[protein] + ATP = O-phospho-L-seryl-[protein] + ADP + H(+). It catalyses the reaction L-threonyl-[protein] + ATP = O-phospho-L-threonyl-[protein] + ADP + H(+). Its activity is regulated as follows. Activation requires autophosphorylation of Ser-356 and, to a lower extent, Ser-352. In terms of biological role, serine/threonine-protein kinase component of the WNK2-SPAK/OSR1 kinase cascade, which plays an important role in the regulation of electrolyte homeostasis, cell signaling, survival, and proliferation. The WNK2-SPAK/OSR1 kinase cascade is composed of WNK2, which mediates phosphorylation and activation of downstream kinases OXSR1/OSR1 and STK39/SPAK. Following activation, OXSR1/OSR1 and STK39/SPAK catalyze phosphorylation of ion cotransporters, regulating their activity. Acts as an activator and inhibitor of sodium-coupled chloride cotransporters and potassium-coupled chloride cotransporters respectively. Activates SLC12A2, SCNN1A, SCNN1B, SCNN1D and SGK1 and inhibits SLC12A5. Negatively regulates the EGF-induced activation of the ERK/MAPK-pathway and the downstream cell cycle progression. Affects MAPK3/MAPK1 activity by modulating the activity of MAP2K1 and this modulation depends on phosphorylation of MAP2K1 by PAK1. WNK2 acts by interfering with the activity of PAK1 by controlling the balance of the activity of upstream regulators of PAK1 activity, RHOA and RAC1, which display reciprocal activity. This is Serine/threonine-protein kinase WNK2 from Mus musculus (Mouse).